Consider the following 292-residue polypeptide: Elongation factor Ts (292 aa).

The involved in Mg(2+) ion dislocation from EF-Tu stretch occupies residues 80-83 (TDFV).

This sequence belongs to the EF-Ts family.

It is found in the cytoplasm. In terms of biological role, associates with the EF-Tu.GDP complex and induces the exchange of GDP to GTP. It remains bound to the aminoacyl-tRNA.EF-Tu.GTP complex up to the GTP hydrolysis stage on the ribosome. This is Elongation factor Ts from Tolumonas auensis (strain DSM 9187 / NBRC 110442 / TA 4).